A 689-amino-acid polypeptide reads, in one-letter code: Choline transporter-like 1 (689 aa).

The helical transmembrane segment at 23 to 43 (IFWLVVYILFWIALLVIAVFS) threads the bilayer. Residue N134 is glycosylated (N-linked (GlcNAc...) asparagine). The next 2 membrane-spanning stretches (helical) occupy residues 199–219 (FSDI…SLIF) and 233–255 (IISW…VLWW). N-linked (GlcNAc...) asparagine glycosylation is present at N279. Transmembrane regions (helical) follow at residues 283–303 (IYVL…VIYY) and 333–353 (VLAF…IVCL). Residues N375 and N389 are each glycosylated (N-linked (GlcNAc...) asparagine). Transmembrane regions (helical) follow at residues 412–432 (IYII…QLVI), 461–481 (LGSV…RLIL), 562–582 (LVLF…SILM), and 591–611 (FYMA…HIVL).

This sequence belongs to the CTL (choline transporter-like) family.

It is found in the membrane. The protein is Choline transporter-like 1 of Aedes aegypti (Yellowfever mosquito).